Reading from the N-terminus, the 268-residue chain is Undecaprenyl-diphosphatase (268 aa).

The next 8 membrane-spanning stretches (helical) occupy residues 3–23 (VFNL…EFIP), 46–66 (FEVL…SAKL), 84–104 (FGIL…HGFI), 107–127 (VLFE…FILL), 144–164 (YPLP…IPGV), 184–204 (AAEF…AYDL), 218–238 (LIGV…RYLL), and 248–268 (LFGW…LVWG).

Belongs to the UppP family.

The protein localises to the cell inner membrane. The catalysed reaction is di-trans,octa-cis-undecaprenyl diphosphate + H2O = di-trans,octa-cis-undecaprenyl phosphate + phosphate + H(+). Its function is as follows. Catalyzes the dephosphorylation of undecaprenyl diphosphate (UPP). Confers resistance to bacitracin. This is Undecaprenyl-diphosphatase from Brucella anthropi (strain ATCC 49188 / DSM 6882 / CCUG 24695 / JCM 21032 / LMG 3331 / NBRC 15819 / NCTC 12168 / Alc 37) (Ochrobactrum anthropi).